The sequence spans 153 residues: Putative pre-16S rRNA nuclease (153 aa).

The protein belongs to the YqgF nuclease family.

The protein resides in the cytoplasm. Its function is as follows. Could be a nuclease involved in processing of the 5'-end of pre-16S rRNA. The protein is Putative pre-16S rRNA nuclease of Chloroflexus aurantiacus (strain ATCC 29366 / DSM 635 / J-10-fl).